Here is a 279-residue protein sequence, read N- to C-terminus: 4-diphosphocytidyl-2-C-methyl-D-erythritol kinase (279 aa).

Lys11 is a catalytic residue. 95-105 (PVAAGLGGGSS) contacts ATP. The active site involves Asp137.

The protein belongs to the GHMP kinase family. IspE subfamily.

The enzyme catalyses 4-CDP-2-C-methyl-D-erythritol + ATP = 4-CDP-2-C-methyl-D-erythritol 2-phosphate + ADP + H(+). The protein operates within isoprenoid biosynthesis; isopentenyl diphosphate biosynthesis via DXP pathway; isopentenyl diphosphate from 1-deoxy-D-xylulose 5-phosphate: step 3/6. In terms of biological role, catalyzes the phosphorylation of the position 2 hydroxy group of 4-diphosphocytidyl-2C-methyl-D-erythritol. This chain is 4-diphosphocytidyl-2-C-methyl-D-erythritol kinase, found in Geotalea daltonii (strain DSM 22248 / JCM 15807 / FRC-32) (Geobacter daltonii).